The following is a 548-amino-acid chain: MLEHPQRFVRNIPDSSASSQQYPQQQQHPPQLPQHQNLNLNQNQNLNQNQIYQYRPQVPVPVPGSPAHHQRHSSLSQQQQLHHHRTLSTASSCSAQHKSVTFGQPALDCGGNGSGSANGSGSGNSSSGSAAGNAGTQSMAGNMKHGKSQDDVCYVVAKYDYAAQGAQELDLRKNERYLLLDDSKHWWRVQNSRNQSGYVPSNYVKKEKPSLFDSIKKKVKKGSGSKTLPNCSPSRQVESPTMSRRLPPDPAEAIGTAVVKYNYQAQQPDELSLTKGTRILILEKSNDGWWRGQSGNSVGWFPSNYTTEDCDNDGEIHTYAMAENVLDIVVALYSFTSNNDQELSFEKGDRLEIVDRPASDPDWYKARNNQGQVGLVPRNYLQELNDYLATPYRNASASAGNGNGGGSNGGAGGGGGNDSMERRNEGNKPAAQSSGQPIERPNLAGKSWYYGAITRSQCDTVLNGHGHDGDFLIRDSETNMGDYSVSLKAPGRNKHFRVHVEQNMYCIGQRKFHSLDQLVDHYQRAPIYTNKQGEKLYLVRSLPKANGT.

Disordered stretches follow at residues 12–37, 57–92, and 113–146; these read IPDS…QHQN, QVPV…TASS, and GSGS…MKHG. Positions 20–37 are enriched in low complexity; it reads QQYPQQQQHPPQLPQHQN. A compositionally biased stretch (gly residues) spans 113–122; it reads GSGSANGSGS. A compositionally biased stretch (low complexity) spans 123 to 135; sequence GNSSSGSAAGNAG. The 60-residue stretch at 150-209 folds into the SH3 1 domain; the sequence is DDVCYVVAKYDYAAQGAQELDLRKNERYLLLDDSKHWWRVQNSRNQSGYVPSNYVKKEKP. The tract at residues 219-247 is disordered; it reads VKKGSGSKTLPNCSPSRQVESPTMSRRLP. Positions 227-242 are enriched in polar residues; it reads TLPNCSPSRQVESPTM. 2 SH3 domains span residues 252–311 and 324–386; these read EAIG…EDCD and NVLD…ELND. Positions 398 to 442 are disordered; it reads SAGNGNGGGSNGGAGGGGGNDSMERRNEGNKPAAQSSGQPIERPN. Residues 401–417 show a composition bias toward gly residues; sequence NGNGGGSNGGAGGGGGN. Positions 448-542 constitute an SH2 domain; it reads WYYGAITRSQ…GEKLYLVRSL (95 aa).

As to quaternary structure, interacts (via SH2 and SH3 domains) with Dscam1 (via cytoplasmic domain); the interaction is direct and requires Dscam1 to be phosphorylated. Interacts (via SH2 and SH3 domains) with InR/Insulin-like receptor (via C-terminal cytoplasmic region); the interaction requires InR kinase activity, probably for autophosphorylation stimulated by insulin signaling. Interacts with Ptp61F (via C-terminus); this interaction is independent of insulin stimulation. Interacts (via SH3 domain 2) with Pak (via N-terminal PXXP motif). Phosphorylated by Src42A and possibly by other tyrosine kinases. Constitutively dephosphorylated by its binding partner Ptp61F.

The protein resides in the perikaryon. It is found in the cell projection. The protein localises to the axon. It localises to the growth cone. Functionally, adapter protein that links cell surface receptor tyrosine phosphorylation to downstream signaling pathways and effectors, many of which are involved in regulation of the actin cytoskeleton. Recruited by Dscam1/Down syndrome cell adhesion molecule homolog and InR/insulin-like receptor. Recruits Pak to membranes, probably when dock/dreadlocks is associated with activated receptors. Required for guidance and targeting of photoreceptor (R cell) axon projections but not for axon outgrowth, differentiation or target induction in the developing eye. As part of a signaling pathway that involves the lbm/late bloomer protein, involved in synapse formation of the RP3 motorneuron at the muscle 7/6 cleft, probably by stimulating axon defasciculation from other SNb neurons. In Drosophila melanogaster (Fruit fly), this protein is SH2/SH3 adapter protein dreadlocks.